The sequence spans 208 residues: Uracil phosphoribosyltransferase (208 aa).

5-phospho-alpha-D-ribose 1-diphosphate contacts are provided by residues R78, R103, and 130–138 (DPMFATGGT). Residues I193 and 198 to 200 (GDA) each bind uracil. D199 provides a ligand contact to 5-phospho-alpha-D-ribose 1-diphosphate.

It belongs to the UPRTase family. Requires Mg(2+) as cofactor.

It catalyses the reaction UMP + diphosphate = 5-phospho-alpha-D-ribose 1-diphosphate + uracil. It functions in the pathway pyrimidine metabolism; UMP biosynthesis via salvage pathway; UMP from uracil: step 1/1. With respect to regulation, allosterically activated by GTP. Its function is as follows. Catalyzes the conversion of uracil and 5-phospho-alpha-D-ribose 1-diphosphate (PRPP) to UMP and diphosphate. The chain is Uracil phosphoribosyltransferase from Campylobacter jejuni subsp. jejuni serotype O:2 (strain ATCC 700819 / NCTC 11168).